Consider the following 263-residue polypeptide: uncharacterized protein (263 aa).

The ABC transporter domain occupies 12–247 (LETQNLAIGY…ENLAKIYRTS (236 aa)). Residue 44 to 51 (GANGAGKS) participates in ATP binding.

This sequence belongs to the ABC transporter superfamily.

This is an uncharacterized protein from Haemophilus influenzae (strain ATCC 51907 / DSM 11121 / KW20 / Rd).